The primary structure comprises 273 residues: Glutamate racemase (273 aa).

Substrate contacts are provided by residues 11–12 (DS) and 43–44 (YG). Cys-74 serves as the catalytic Proton donor/acceptor. 75-76 (NT) lines the substrate pocket. The active-site Proton donor/acceptor is the Cys-185. Residue 186-187 (TH) participates in substrate binding.

This sequence belongs to the aspartate/glutamate racemases family.

It catalyses the reaction L-glutamate = D-glutamate. The protein operates within cell wall biogenesis; peptidoglycan biosynthesis. Functionally, provides the (R)-glutamate required for cell wall biosynthesis. The chain is Glutamate racemase from Lactiplantibacillus plantarum (strain ATCC BAA-793 / NCIMB 8826 / WCFS1) (Lactobacillus plantarum).